The following is a 284-amino-acid chain: uncharacterized protein (284 aa).

Belongs to the methyltransferase superfamily.

The protein resides in the cytoplasm. It localises to the nucleus. Functionally, probable methyltransferase. This is an uncharacterized protein from Schizosaccharomyces pombe (strain 972 / ATCC 24843) (Fission yeast).